A 231-amino-acid chain; its full sequence is Sporulation protein RMD6 (231 aa).

It is found in the peroxisome. Its function is as follows. Required for sporulation. Required for meiotic nuclear division. The protein is Sporulation protein RMD6 (RMD6) of Saccharomyces cerevisiae (strain ATCC 204508 / S288c) (Baker's yeast).